A 546-amino-acid chain; its full sequence is Chaperonin GroEL (546 aa).

ATP is bound by residues 29 to 32, Lys50, 86 to 90, Gly415, and Asp495; these read TLGP and DGTTT.

The protein belongs to the chaperonin (HSP60) family. In terms of assembly, forms a cylinder of 14 subunits composed of two heptameric rings stacked back-to-back. Interacts with the co-chaperonin GroES.

Its subcellular location is the cytoplasm. It catalyses the reaction ATP + H2O + a folded polypeptide = ADP + phosphate + an unfolded polypeptide.. In terms of biological role, together with its co-chaperonin GroES, plays an essential role in assisting protein folding. The GroEL-GroES system forms a nano-cage that allows encapsulation of the non-native substrate proteins and provides a physical environment optimized to promote and accelerate protein folding. The protein is Chaperonin GroEL of Parabacteroides distasonis (strain ATCC 8503 / DSM 20701 / CIP 104284 / JCM 5825 / NCTC 11152).